The primary structure comprises 115 residues: uncharacterized protein (115 aa).

Over 1–11 (MKLTKEKKNDC) the chain is Cytoplasmic. Residues 12-32 (LVGVSYIPPLNFFTLTFLFLL) form a helical membrane-spanning segment. Topologically, residues 33–52 (RIEKVHLSLSLSLSLSLRFY) are extracellular. A helical membrane pass occupies residues 53-73 (YFHNVCYPSLFLFFCFVIPFF). The Cytoplasmic portion of the chain corresponds to 74 to 78 (YSVRF). A helical membrane pass occupies residues 79–98 (ILLYLHILRSFYELNILLLY). Residues 99–115 (GAENSRRQSPPGYYVIR) are Extracellular-facing.

The protein resides in the membrane. This is an uncharacterized protein from Saccharomyces cerevisiae (strain ATCC 204508 / S288c) (Baker's yeast).